Consider the following 60-residue polypeptide: Large ribosomal subunit protein bL32 (60 aa).

Residues 1–43 form a disordered region; it reads MAVQQNRKTRSRRGMRRSHDALTGKTLSVDSTTGEKHLRHHVT. A compositionally biased stretch (basic residues) spans 7–16; that stretch reads RKTRSRRGMR.

The protein belongs to the bacterial ribosomal protein bL32 family.

The polypeptide is Large ribosomal subunit protein bL32 (Saccharophagus degradans (strain 2-40 / ATCC 43961 / DSM 17024)).